We begin with the raw amino-acid sequence, 160 residues long: Cytochrome b6-f complex subunit 4 (160 aa).

3 consecutive transmembrane segments (helical) span residues 36 to 56 (LLYI…GLGV), 95 to 115 (LLGV…PFIE), and 131 to 151 (LVFL…TMPI).

Belongs to the cytochrome b family. PetD subfamily. As to quaternary structure, the 4 large subunits of the cytochrome b6-f complex are cytochrome b6, subunit IV (17 kDa polypeptide, petD), cytochrome f and the Rieske protein, while the 4 small subunits are petG, petL, petM and petN. The complex functions as a dimer.

The protein localises to the plastid. The protein resides in the chloroplast thylakoid membrane. Its function is as follows. Component of the cytochrome b6-f complex, which mediates electron transfer between photosystem II (PSII) and photosystem I (PSI), cyclic electron flow around PSI, and state transitions. In Emiliania huxleyi (Coccolithophore), this protein is Cytochrome b6-f complex subunit 4.